The sequence spans 843 residues: Protein P (843 aa).

The interval 1–177 is terminal protein domain (TP); that stretch reads MPLSYQHFRR…FCGSPYSWEQ (177 aa). The interval 178–346 is spacer; that stretch reads ELQHGSTSLN…YCLSHIINLL (169 aa). The tract at residues 249–301 is disordered; that stretch reads TPTRWPSGVEPSGTGHSDNLATRSTSRFHQSEVRKETNPSLSTSKGHTSTGHA. 2 stretches are compositionally biased toward polar residues: residues 262-276 and 286-299; these read TGHS…TSRF and NPSL…TSTG. The segment at 347 to 690 is polymerase/reverse transcriptase domain (RT); it reads EDWGPCYEHG…YMNLYPVARQ (344 aa). Residues 357 to 600 enclose the Reverse transcriptase domain; sequence EHHIRTPRTP…YSLHFMGYII (244 aa). Mg(2+) contacts are provided by Asp-429, Asp-551, and Asp-552.

Belongs to the hepadnaviridae P protein family.

The catalysed reaction is DNA(n) + a 2'-deoxyribonucleoside 5'-triphosphate = DNA(n+1) + diphosphate. It carries out the reaction Endonucleolytic cleavage to 5'-phosphomonoester.. Its activity is regulated as follows. Activated by host HSP70 and HSP40 in vitro to be able to bind the epsilon loop of the pgRNA. Because deletion of the RNase H region renders the protein partly chaperone-independent, the chaperones may be needed indirectly to relieve occlusion of the RNA-binding site by this domain. Inhibited by several reverse-transcriptase inhibitors: Lamivudine, Adefovir and Entecavir. Its function is as follows. Multifunctional enzyme that converts the viral RNA genome into dsDNA in viral cytoplasmic capsids. This enzyme displays a DNA polymerase activity that can copy either DNA or RNA templates, and a ribonuclease H (RNase H) activity that cleaves the RNA strand of RNA-DNA heteroduplexes in a partially processive 3'- to 5'-endonucleasic mode. Neo-synthesized pregenomic RNA (pgRNA) are encapsidated together with the P protein, and reverse-transcribed inside the nucleocapsid. Initiation of reverse-transcription occurs first by binding the epsilon loop on the pgRNA genome, and is initiated by protein priming, thereby the 5'-end of (-)DNA is covalently linked to P protein. Partial (+)DNA is synthesized from the (-)DNA template and generates the relaxed circular DNA (RC-DNA) genome. After budding and infection, the RC-DNA migrates in the nucleus, and is converted into a plasmid-like covalently closed circular DNA (cccDNA). The activity of P protein does not seem to be necessary for cccDNA generation, and is presumably released from (+)DNA by host nuclear DNA repair machinery. The polypeptide is Protein P (Homo sapiens (Human)).